We begin with the raw amino-acid sequence, 191 residues long: Thymidine kinase (191 aa).

ATP contacts are provided by residues 15–22 (GSMFSGKS) and 88–91 (DEVQ). The active-site Proton acceptor is the E89. Zn(2+) contacts are provided by C145, C148, C183, and H186.

This sequence belongs to the thymidine kinase family. Homotetramer.

It is found in the cytoplasm. The catalysed reaction is thymidine + ATP = dTMP + ADP + H(+). This chain is Thymidine kinase, found in Macrococcus caseolyticus (strain JCSC5402) (Macrococcoides caseolyticum).